The primary structure comprises 326 residues: Zinc finger CCCH domain-containing protein 15 (326 aa).

Residues 1–14 (MADGGGGGEAGSGG) show a composition bias toward gly residues. Residues 1-142 (MADGGGGGEA…SSSGSGSGEV (142 aa)) form a disordered region. Basic residues predominate over residues 24–33 (KPPKNIRKRP). Residues 47–64 (SGAIAAARAKKAPSSTSK) are compositionally biased toward low complexity. The span at 81-100 (YESSRTIQASTDSRATATLE) shows a compositional bias: polar residues. Over residues 104-125 (EFDRDARAIRERQLKQAEESLK) the composition is skewed to basic and acidic residues. The C3H1-type zinc-finger motif lies at 187-215 (DYQPDICKDYKETGYCGYGDSCKFMHDRG). The RING-type zinc-finger motif lies at 265–303 (CYICREPFVDPVVTKCKHYFCEHCALKHHSKNKKCFVCN).

In Oryza sativa subsp. japonica (Rice), this protein is Zinc finger CCCH domain-containing protein 15.